The sequence spans 489 residues: GTPase Der (489 aa).

2 EngA-type G domains span residues proline 30 to proline 199 and phenylalanine 227 to histidine 403. GTP is bound by residues glycine 36–serine 43, aspartate 85–leucine 89, asparagine 151–aspartate 154, glycine 233–serine 240, aspartate 280–isoleucine 284, and asparagine 345–aspartate 348. The 85-residue stretch at arginine 404 to arginine 488 folds into the KH-like domain.

It belongs to the TRAFAC class TrmE-Era-EngA-EngB-Septin-like GTPase superfamily. EngA (Der) GTPase family. Associates with the 50S ribosomal subunit.

GTPase that plays an essential role in the late steps of ribosome biogenesis. The sequence is that of GTPase Der from Leptospira interrogans serogroup Icterohaemorrhagiae serovar Lai (strain 56601).